Consider the following 212-residue polypeptide: Ribosomal RNA large subunit methyltransferase E (212 aa).

S-adenosyl-L-methionine contacts are provided by glycine 57, tryptophan 59, aspartate 77, aspartate 93, and aspartate 122. The active-site Proton acceptor is the lysine 162.

Belongs to the class I-like SAM-binding methyltransferase superfamily. RNA methyltransferase RlmE family.

It localises to the cytoplasm. It catalyses the reaction uridine(2552) in 23S rRNA + S-adenosyl-L-methionine = 2'-O-methyluridine(2552) in 23S rRNA + S-adenosyl-L-homocysteine + H(+). Specifically methylates the uridine in position 2552 of 23S rRNA at the 2'-O position of the ribose in the fully assembled 50S ribosomal subunit. The protein is Ribosomal RNA large subunit methyltransferase E of Coxiella burnetii (strain RSA 331 / Henzerling II).